A 272-amino-acid chain; its full sequence is ATP synthase subunit a (272 aa).

5 consecutive transmembrane segments (helical) span residues 41-61, 101-121, 147-167, 212-232, and 243-263; these read TLNI…LVLF, LIAP…LMDL, DVNI…FYSI, LFGN…LLPW, and AIFH…LTIV.

Belongs to the ATPase A chain family. As to quaternary structure, F-type ATPases have 2 components, CF(1) - the catalytic core - and CF(0) - the membrane proton channel. CF(1) has five subunits: alpha(3), beta(3), gamma(1), delta(1), epsilon(1). CF(0) has three main subunits: a(1), b(2) and c(9-12). The alpha and beta chains form an alternating ring which encloses part of the gamma chain. CF(1) is attached to CF(0) by a central stalk formed by the gamma and epsilon chains, while a peripheral stalk is formed by the delta and b chains.

It is found in the cell inner membrane. Functionally, key component of the proton channel; it plays a direct role in the translocation of protons across the membrane. The sequence is that of ATP synthase subunit a from Cronobacter sakazakii (strain ATCC BAA-894) (Enterobacter sakazakii).